The following is a 132-amino-acid chain: Small ribosomal subunit protein uS8 (132 aa).

Belongs to the universal ribosomal protein uS8 family. In terms of assembly, part of the 30S ribosomal subunit. Contacts proteins S5 and S12.

Its function is as follows. One of the primary rRNA binding proteins, it binds directly to 16S rRNA central domain where it helps coordinate assembly of the platform of the 30S subunit. The polypeptide is Small ribosomal subunit protein uS8 (Syntrophobacter fumaroxidans (strain DSM 10017 / MPOB)).